The primary structure comprises 1037 residues: MVDALNLGRRLRVRSTAYVAGEPVPFFWPMRTFIHHNPLYGLEDMPFEQAVRRGAELFHARMFLPRSDYQRWQREGKVRPETLKEEIGRRSQDLPPVPGVDWPRWLHALMQTPHDRDAVVRGVRAKDVHAALHGHPPSAQAVDVAALLPELEQRLHARTLPEAVDALWGTGLADELDELVIKNCLDFFDEDQSAWRMPGRERGLFSAWSEVTRRNARMVLRRLHVRHILDHVQDAESAVVYVMEEMGIGAEAWPTYFTRVLTRLHGWTGFVRWRASAKHYYWAQQYPADIVDLLAIRLVMGLALLQESARHRGTPMRRDDLGAVVRERGAECVLRYALHSGEVLPDWAQRIDDTLSRGNGARCHDLLQRYWPLWQARLGQQQAAALRELAAAANATAALDALAPEDVEGLLQGLRDFAPQEGMVWTLAMEGQAIDKLLTQVQAPQDPPPDKIPFAQAWFCIDVRAEPIRRHLERVGNYQTFGIAGFFGVPVGFLGYGKGSESHYCPAVITPKNLVLELPAALDPHNEDFVSTLGHVLHDLKKSVLSPYVTVEAVGMLFGLDLFGKTLAPLGYSRWRRRIDTEKPVTRLLVDKLSREQADSIIRTLQRAMIVKALHTELKIERERVDDDMIRELREIALRRRDGPTRLRTTFGVPQTQEAEFIDKLRQVYGVDADYTNHQLERLGRIGYSLDEQVNYVHTALTMIGLTQTFSRFVLVVGHGGKTENNPYESALDCGACGGASGIVNARVFAQMANKPAVRERLAAMGITIPEDTWFMPALHVTTTDAIELFDLDLLPPRHLVYLERLRDGLRAASRLTAAERMPKLLPEAKALEPAEALRLANRLAVDWAQVRPEWGLSGNVYGIVGRRALTENSDLQGSAFLLSYDWRCDPRGRLLENLLAAPVVVGQWINLEHFFSTVDNAHLGSGSKVYHNVSGRFGVMTGSLSDLRTGLPMQTVMREGRPYHEPMRLIALIEAPLDFAGRVLERVVKVKSLVLGGWIRAIVIDPTQGYKPFVFNNGQWEERTPLIAPAEKEYSA.

Cysteine 460, aspartate 462, histidine 719, and cysteine 734 together coordinate Zn(2+).

This sequence belongs to the inorganic carbon transporter (TC 9.A.2) DabA family. As to quaternary structure, forms a complex with DabB. It depends on Zn(2+) as a cofactor.

Its subcellular location is the cell inner membrane. Functionally, part of an energy-coupled inorganic carbon pump. The sequence is that of Probable inorganic carbon transporter subunit DabA 1 from Nitrobacter winogradskyi (strain ATCC 25391 / DSM 10237 / CIP 104748 / NCIMB 11846 / Nb-255).